We begin with the raw amino-acid sequence, 75 residues long: DNA-directed RNA polymerase subunit omega (75 aa).

The protein belongs to the RNA polymerase subunit omega family. As to quaternary structure, the RNAP catalytic core consists of 2 alpha, 1 beta, 1 beta' and 1 omega subunit. When a sigma factor is associated with the core the holoenzyme is formed, which can initiate transcription.

It carries out the reaction RNA(n) + a ribonucleoside 5'-triphosphate = RNA(n+1) + diphosphate. In terms of biological role, promotes RNA polymerase assembly. Latches the N- and C-terminal regions of the beta' subunit thereby facilitating its interaction with the beta and alpha subunits. The protein is DNA-directed RNA polymerase subunit omega of Lysinibacillus sphaericus (strain C3-41).